Here is a 108-residue protein sequence, read N- to C-terminus: Ig kappa chain V-V region EPC 109 (108 aa).

The framework-1 stretch occupies residues 1–23; it reads DVQMIQSPSSLSASLGDIVTMTC. Cysteine 23 and cysteine 88 are disulfide-bonded. The tract at residues 24–34 is complementarity-determining-1; sequence QASQGTNINLN. The tract at residues 35-49 is framework-2; the sequence is WFQQKPGKAPKLLIY. The complementarity-determining-2 stretch occupies residues 50-56; that stretch reads GASILEA. Positions 57–88 are framework-3; that stretch reads GVPSRFSGRRYGTDFTLTISSLEDEDMATYFC. The tract at residues 89–97 is complementarity-determining-3; that stretch reads LQHSYLPYT. Positions 98–108 are framework-4; the sequence is FGGGTKLEKKR.

The polypeptide is Ig kappa chain V-V region EPC 109 (Mus musculus (Mouse)).